Consider the following 214-residue polypeptide: RNA pyrophosphohydrolase (214 aa).

Residues 6 to 149 (GFRPNVGIIL…KRDVYQLALT (144 aa)) form the Nudix hydrolase domain. The short motif at 38–59 (GGIKYGETPMQAMYRELHEETG) is the Nudix box element.

Belongs to the Nudix hydrolase family. RppH subfamily. A divalent metal cation serves as cofactor.

Accelerates the degradation of transcripts by removing pyrophosphate from the 5'-end of triphosphorylated RNA, leading to a more labile monophosphorylated state that can stimulate subsequent ribonuclease cleavage. In Burkholderia cenocepacia (strain HI2424), this protein is RNA pyrophosphohydrolase.